A 174-amino-acid polypeptide reads, in one-letter code: Protein GrpE (174 aa).

Residues 1–35 are disordered; the sequence is MAQDIKNEEVEEVQEEEVVETAEETTPEKSELDLA. Over residues 9 to 25 the composition is skewed to acidic residues; that stretch reads EVEEVQEEEVVETAEET. Over residues 26 to 35 the composition is skewed to basic and acidic residues; sequence TPEKSELDLA.

The protein belongs to the GrpE family. In terms of assembly, homodimer.

The protein localises to the cytoplasm. In terms of biological role, participates actively in the response to hyperosmotic and heat shock by preventing the aggregation of stress-denatured proteins, in association with DnaK and GrpE. It is the nucleotide exchange factor for DnaK and may function as a thermosensor. Unfolded proteins bind initially to DnaJ; upon interaction with the DnaJ-bound protein, DnaK hydrolyzes its bound ATP, resulting in the formation of a stable complex. GrpE releases ADP from DnaK; ATP binding to DnaK triggers the release of the substrate protein, thus completing the reaction cycle. Several rounds of ATP-dependent interactions between DnaJ, DnaK and GrpE are required for fully efficient folding. The chain is Protein GrpE from Streptococcus pneumoniae (strain ATCC BAA-255 / R6).